The sequence spans 521 residues: MNQSKEVRTRFAPSPSGFLHVGGARTALFNYLYAKSQGGKFILRIEDTDQNRSTEDSFKIILESLKWLGVNWDEGPEVGGEYGPYIQSQRLNIYKEYTEKLLKEKKAYRCFCTQEELEAKKKQSEAMGVPYVYDGLHANMSDEEVQEKLKQGIPYSVRFKTPSKTLIINDIIQGKVKFETKLIGDFIIVKSDGFPSYNYAVVVDDALMKITHVIRGVGHLSNTPRQILLYEALGYNIPEFAHASEIVGMDGKKLSKRAGATSILAFRDLGYLPETFRNYMALLGWTSTDGREFLPGDELEKIFDVHRCSKSPSTFDVFKKPKGSDEEVVTNFSDLTQIAEAMNPKSKLNWLSNRTIRDLNISKVLENLLPFLMDRKDIPAEVKNVNNPILTSIVESVRVYLDNLTQAPDYVAEFFVTDLKIQSEETIGFLKDGEGPKVVNEFYEILKNSDPKTDEDYKNLMSKVGEVTGQKGKTLYMPIRAATTGKSAGLELPILFPLLGKEKLLQRIEKTSKETGISLSN.

The short motif at Pro13 to Gly23 is the 'HIGH' region element. The 'KMSKS' region signature appears at Lys253–Arg257. Lys256 contacts ATP.

It belongs to the class-I aminoacyl-tRNA synthetase family. Glutamate--tRNA ligase type 1 subfamily. Monomer.

It is found in the cytoplasm. It carries out the reaction tRNA(Glu) + L-glutamate + ATP = L-glutamyl-tRNA(Glu) + AMP + diphosphate. Catalyzes the attachment of glutamate to tRNA(Glu) in a two-step reaction: glutamate is first activated by ATP to form Glu-AMP and then transferred to the acceptor end of tRNA(Glu). The chain is Glutamate--tRNA ligase from Leptospira interrogans serogroup Icterohaemorrhagiae serovar copenhageni (strain Fiocruz L1-130).